Consider the following 84-residue polypeptide: Anaphase-promoting complex subunit 11 (84 aa).

The Zn(2+) site is built by C23, C26, C34, C37, C44, C51, H53, H56, H58, C59, C73, and C76. An RING-type zinc finger spans residues 34–77 (CPDCKVPGDDCPLVWGQCSHCFHMHCILKWLHAQQVQQHCPMCR).

This sequence belongs to the RING-box family. In terms of assembly, the mammalian APC/C is composed at least of 14 distinct subunits ANAPC1, ANAPC2, CDC27/APC3, ANAPC4, ANAPC5, CDC16/APC6, ANAPC7, CDC23/APC8, ANAPC10, ANAPC11, CDC26/APC12, ANAPC13, ANAPC15 and ANAPC16 that assemble into a complex of at least 19 chains with a combined molecular mass of around 1.2 MDa; APC/C interacts with FZR1 and FBXO5. Interacts with the cullin domain of ANAPC2. Interacts with UBE2D2. In terms of processing, auto-ubiquitinated. Expressed at high levels in skeletal muscle and heart; in moderate levels in brain, kidney, and liver; and at low levels in colon, thymus, spleen, small intestine, placenta, lung and peripheral blood leukocyte.

Its subcellular location is the cytoplasm. It localises to the nucleus. The protein operates within protein modification; protein ubiquitination. Its function is as follows. Together with the cullin protein ANAPC2, constitutes the catalytic component of the anaphase promoting complex/cyclosome (APC/C), a cell cycle-regulated E3 ubiquitin ligase that controls progression through mitosis and the G1 phase of the cell cycle. The APC/C complex acts by mediating ubiquitination and subsequent degradation of target proteins: it mainly mediates the formation of 'Lys-11'-linked polyubiquitin chains and, to a lower extent, the formation of 'Lys-48'- and 'Lys-63'-linked polyubiquitin chains. The APC/C complex catalyzes assembly of branched 'Lys-11'-/'Lys-48'-linked branched ubiquitin chains on target proteins. May recruit the E2 ubiquitin-conjugating enzymes to the complex. The chain is Anaphase-promoting complex subunit 11 (ANAPC11) from Homo sapiens (Human).